The following is a 667-amino-acid chain: Coiled-coil domain-containing protein 154 (667 aa).

4 coiled-coil regions span residues Val-76 to Gly-182, Arg-215 to Glu-302, Leu-384 to Leu-410, and Leu-457 to Asn-521.

It localises to the early endosome. The sequence is that of Coiled-coil domain-containing protein 154 from Homo sapiens (Human).